Consider the following 1017-residue polypeptide: Probable DNA ligase (1017 aa).

The tract at residues 1–363 (MPWDVKFSHG…PACATPLHAP (363 aa)) is unknown. A disordered region spans residues 326–352 (GIRSSPPQVRAGDATPSSRSSGDAGVA). The tract at residues 364–1017 (DSFARFVAAA…GARPPPAASD (654 aa)) is DNA ligase. Residue Glu667 participates in ATP binding. Lys669 (N6-AMP-lysine intermediate) is an active-site residue. Arg674, Arg689, Glu717, Arg860, and Lys866 together coordinate ATP.

It in the C-terminal section; belongs to the ATP-dependent DNA ligase family. Requires Mg(2+) as cofactor.

The enzyme catalyses ATP + (deoxyribonucleotide)n-3'-hydroxyl + 5'-phospho-(deoxyribonucleotide)m = (deoxyribonucleotide)n+m + AMP + diphosphate.. In terms of biological role, DNA ligase that seals nicks in double-stranded DNA during DNA replication, DNA recombination and DNA repair. This is Probable DNA ligase (lig) from Opitutus terrae (strain DSM 11246 / JCM 15787 / PB90-1).